A 313-amino-acid polypeptide reads, in one-letter code: tRNA dimethylallyltransferase (313 aa).

10–17 (GPTAVGKT) provides a ligand contact to ATP. 12 to 17 (TAVGKT) contributes to the substrate binding site. The interaction with substrate tRNA stretch occupies residues 35–38 (DSMQ).

This sequence belongs to the IPP transferase family. As to quaternary structure, monomer. Mg(2+) serves as cofactor.

The enzyme catalyses adenosine(37) in tRNA + dimethylallyl diphosphate = N(6)-dimethylallyladenosine(37) in tRNA + diphosphate. In terms of biological role, catalyzes the transfer of a dimethylallyl group onto the adenine at position 37 in tRNAs that read codons beginning with uridine, leading to the formation of N6-(dimethylallyl)adenosine (i(6)A). In Alkaliphilus oremlandii (strain OhILAs) (Clostridium oremlandii (strain OhILAs)), this protein is tRNA dimethylallyltransferase.